Reading from the N-terminus, the 371-residue chain is Zygote-specific protein 3 (371 aa).

An N-terminal signal peptide occupies residues 1–24 (MLRSAGRVAAVALLALFALGCVSA). A glycan (N-linked (GlcNAc...) asparagine) is linked at Asn41. 2 ANK repeats span residues 62 to 91 (TRRLPLVEAARSRDARLVGALLDQGALARV) and 94 to 123 (GTTTPLHLSMQGGSAAIVKLLLAHGADPNA). WW domains lie at 159-187 (EPGAWIREERDGQSYYWKPANGESRWAVP) and 283-313 (YATPWRELVDEASGAPFFFNVETGDTTWELP).

Its subcellular location is the endoplasmic reticulum lumen. Functionally, may have a role in the remodeling of the endoplasmic reticulum upon zygote formation. The polypeptide is Zygote-specific protein 3 (ZYS3) (Chlamydomonas reinhardtii (Chlamydomonas smithii)).